A 161-amino-acid chain; its full sequence is Ribosome maturation factor RimP (161 aa).

It belongs to the RimP family.

It localises to the cytoplasm. Functionally, required for maturation of 30S ribosomal subunits. The polypeptide is Ribosome maturation factor RimP (Rickettsia conorii (strain ATCC VR-613 / Malish 7)).